The primary structure comprises 479 residues: Glutamyl-tRNA(Gln) amidotransferase subunit A (479 aa).

Catalysis depends on charge relay system residues lysine 71 and serine 146. Serine 170 (acyl-ester intermediate) is an active-site residue.

It belongs to the amidase family. GatA subfamily. Heterotrimer of A, B and C subunits.

It catalyses the reaction L-glutamyl-tRNA(Gln) + L-glutamine + ATP + H2O = L-glutaminyl-tRNA(Gln) + L-glutamate + ADP + phosphate + H(+). In terms of biological role, allows the formation of correctly charged Gln-tRNA(Gln) through the transamidation of misacylated Glu-tRNA(Gln) in organisms which lack glutaminyl-tRNA synthetase. The reaction takes place in the presence of glutamine and ATP through an activated gamma-phospho-Glu-tRNA(Gln). In Lactobacillus gasseri (strain ATCC 33323 / DSM 20243 / BCRC 14619 / CIP 102991 / JCM 1131 / KCTC 3163 / NCIMB 11718 / NCTC 13722 / AM63), this protein is Glutamyl-tRNA(Gln) amidotransferase subunit A.